The chain runs to 74 residues: Large ribosomal subunit protein bL31 (74 aa).

Residues cysteine 16, cysteine 18, cysteine 38, and cysteine 41 each coordinate Zn(2+).

It belongs to the bacterial ribosomal protein bL31 family. Type A subfamily. As to quaternary structure, part of the 50S ribosomal subunit. The cofactor is Zn(2+).

In terms of biological role, binds the 23S rRNA. This is Large ribosomal subunit protein bL31 from Streptomyces griseus subsp. griseus (strain JCM 4626 / CBS 651.72 / NBRC 13350 / KCC S-0626 / ISP 5235).